The sequence spans 601 residues: MDWGTELWDQFEVLERHTQWGLDLLDRYVKFVKERTEVEQAYAKQLRSLVKKYLPKRPAKDDPESKFSQQQSFVQILQEVNDFAGQRELVAENLSVRVCLELTKYSQEMKQERKMHFQEGRRAQQQLENGFKQLENSKRKFERDCREAEKAAQTAERLDQDINATKADVEKAKQQAHLRSHMAEESKNEYAAQLQRFNRDQAHFYFSQMPQIFDKLQDMDERRATRLGAGYGLLSEAELEVVPIIAKCLEGMKVAANAVDPKNDSHVLIELHKSGFARPGDVEFEDFSQPMNRAPSDSSLGTPSDGRPELRGPGRSRTKRWPFGKKNKPRPPPLSPLGGPVPSALPNGPPSPRSGRDPLAILSEISKSVKPRLASFRSLRGSRGTVVTEDFSHLPPEQQRKRLQQQLEERSRELQKEVDQREALKKMKDVYEKTPQMGDPASLEPQIAETLSNIERLKLEVQKYEAWLAEAESRVLSNRGDSLSRHARPPDPPASAPPDSSSNSASQDTKESSEEPPSEESQDTPIYTEFDEDFEEEPTSPIGHCVAIYHFEGSSEGTISMAEGEDLSLMEEDKGDGWTRVRRKEGGEGYVPTSYLRVTLN.

The segment at 1–117 is required for podosome formation and interaction with AKAP9 and microtubules; the sequence is MDWGTELWDQ…EMKQERKMHF (117 aa). A required for translocation to the plasma membrane in response to insulin region spans residues 1 to 117; that stretch reads MDWGTELWDQ…EMKQERKMHF (117 aa). One can recognise an F-BAR domain in the interval 1 to 264; that stretch reads MDWGTELWDQ…AANAVDPKND (264 aa). Residues 67–259 are a coiled coil; sequence FSQQQSFVQI…EGMKVAANAV (193 aa). 3 disordered regions span residues 280–358, 390–420, and 479–543; these read GDVE…GRDP, DFSH…EVDQ, and RGDS…SPIG. Positions 289-302 are enriched in polar residues; sequence QPMNRAPSDSSLGT. The interval 293 to 537 is interaction with CDC42; it reads RAPSDSSLGT…TEFDEDFEEE (245 aa). The interval 293 to 601 is interaction with PDE6G; the sequence is RAPSDSSLGT…PTSYLRVTLN (309 aa). A phosphoserine mark is found at Ser296, Ser298, and Ser299. The segment covering 314-329 has biased composition (basic residues); sequence GRSRTKRWPFGKKNKP. Phosphoserine is present on Ser335. The span at 336–346 shows a compositional bias: low complexity; the sequence is PLGGPVPSALP. Ser351 bears the Phosphoserine mark. A coiled-coil region spans residues 388–481; it reads TEDFSHLPPE…ESRVLSNRGD (94 aa). The REM-1 domain maps to 393–470; it reads HLPPEQQRKR…VQKYEAWLAE (78 aa). Basic and acidic residues predominate over residues 407 to 420; that stretch reads LEERSRELQKEVDQ. Residues 471 to 601 are required for interaction with FASLG and localization to lysosomes; it reads AESRVLSNRG…PTSYLRVTLN (131 aa). Position 482 is a phosphoserine (Ser482). The interval 487–541 is interaction with DNM2 and WASL; the sequence is ARPPDPPASAPPDSSSNSASQDTKESSEEPPSEESQDTPIYTEFDEDFEEEPTSP. Residues 497 to 506 are compositionally biased toward low complexity; the sequence is PPDSSSNSAS. The span at 529–538 shows a compositional bias: acidic residues; it reads EFDEDFEEEP. The interval 529-601 is interaction with DNM1 and WASL; sequence EFDEDFEEEP…PTSYLRVTLN (73 aa). A required for podosome formation region spans residues 538–601; the sequence is PTSPIGHCVA…PTSYLRVTLN (64 aa). The 62-residue stretch at 540-601 folds into the SH3 domain; that stretch reads SPIGHCVAIY…PTSYLRVTLN (62 aa). Positions 544–601 are interaction with WAS; that stretch reads HCVAIYHFEGSSEGTISMAEGEDLSLMEEDKGDGWTRVRRKEGGEGYVPTSYLRVTLN. Positions 546-601 are interaction with ARHGAP17, DAAM1, DIAPH1 and DIAPH2; it reads VAIYHFEGSSEGTISMAEGEDLSLMEEDKGDGWTRVRRKEGGEGYVPTSYLRVTLN.

It belongs to the FNBP1 family. Interacts specifically with GTP-bound RHOQ. Interacts with DNM2 and PDE6G. Homodimerizes, the dimers can polymerize end-to-end to form filamentous structures. Interacts specifically with GTP-bound CDC42. Interacts with AKAP9, ARHGAP17, DAAM1, DIAPH1, DIAPH2, DNM1, FASLG/FASL, GAPVD1, LYN, microtubules, SRC, WAS/WASP and WASL/N-WASP. Interacts with the ligand binding domain of the thyroid receptor (TR) in the presence of thyroid hormone. May interact with CTNNB1 and HD/HTT. Post-translationally, tyrosine phosphorylated. Also phosphorylated by PKA. Expressed in brain, colon, heart, kidney, liver, lung, megakaryocyte, ovary, pancreas, peripheral blood lymphocytes, placenta, prostate, skeletal muscle, small intestine, spleen, testis, thymus and trachea.

Its subcellular location is the cytoplasm. It localises to the cytoskeleton. The protein localises to the cell cortex. It is found in the lysosome. The protein resides in the golgi apparatus. Its subcellular location is the cell membrane. It localises to the cell projection. The protein localises to the phagocytic cup. It is found in the perinuclear region. In terms of biological role, required for translocation of GLUT4 to the plasma membrane in response to insulin signaling. Required to coordinate membrane tubulation with reorganization of the actin cytoskeleton during endocytosis. Binds to lipids such as phosphatidylinositol 4,5-bisphosphate and phosphatidylserine and promotes membrane invagination and the formation of tubules. Also promotes CDC42-induced actin polymerization by recruiting WASL/N-WASP which in turn activates the Arp2/3 complex. Actin polymerization may promote the fission of membrane tubules to form endocytic vesicles. Required for the formation of podosomes, actin-rich adhesion structures specific to monocyte-derived cells. May be required for the lysosomal retention of FASLG/FASL. In Homo sapiens (Human), this protein is Cdc42-interacting protein 4 (TRIP10).